The primary structure comprises 137 residues: Large ribosomal subunit protein uL16 (137 aa).

The span at 1 to 19 shows a compositional bias: basic residues; the sequence is MLSPKKVKFRKQQRGRRTG. The tract at residues 1-20 is disordered; it reads MLSPKKVKFRKQQRGRRTGT.

The protein belongs to the universal ribosomal protein uL16 family. Part of the 50S ribosomal subunit.

Binds 23S rRNA and is also seen to make contacts with the A and possibly P site tRNAs. The protein is Large ribosomal subunit protein uL16 of Desulfosudis oleivorans (strain DSM 6200 / JCM 39069 / Hxd3) (Desulfococcus oleovorans).